The following is a 454-amino-acid chain: DNA-binding protein BIN4 (454 aa).

Disordered regions lie at residues 24-53 (LLSLSSSDDDSPYRESEVISSLPLPDDDGD), 103-249 (AGKE…DKDT), and 380-454 (TFES…KAKK). Positions 112–123 (DCEKLSSKHKDA) are enriched in basic and acidic residues. A compositionally biased stretch (polar residues) spans 132–150 (LVSSDSEPSSPIKQEVTVS). Residues 229-249 (TPKEENCAQEILKTEDKDKDT) show a composition bias toward basic and acidic residues. Over residues 438-454 (PAKKARNSAPKKPKAKK) the composition is skewed to basic residues.

In terms of assembly, interacts with TOP6A, RHL1 and itself, but not with TOP6B. As to expression, expressed in expanding cotyledons, vascular cells, elongating root cells, developing leaf trichomes, root and apical meristems and lateral root primordia.

The protein resides in the nucleus. Its function is as follows. Component of the DNA topoisomerase VI complex. Binds to DNA. Required for chromatin organization and progression of endoreduplication cycles. The loss of BIN4 activates the ATM- and ATR-dependent DNA damage responses in postmitotic cells and induces the ectopic expression of the mitotic G2/M-specific cyclin B1;1 gene in non-dividing cells. The sequence is that of DNA-binding protein BIN4 (BIN4) from Arabidopsis thaliana (Mouse-ear cress).